Reading from the N-terminus, the 197-residue chain is Probable host range protein 2 (197 aa).

Positions 172–197 (DHDDNDNADDDEEDDDEVNDIEDDYE) are disordered. Acidic residues predominate over residues 174 to 197 (DDNDNADDDEEDDDEVNDIEDDYE).

It belongs to the poxviridae C7 protein family.

This chain is Probable host range protein 2, found in Ovis aries (Sheep).